A 184-amino-acid chain; its full sequence is Shikimate kinase (184 aa).

18–23 contributes to the ATP binding site; the sequence is GAGKTT. Thr-22 lines the Mg(2+) pocket. Substrate contacts are provided by Asp-40, Arg-64, and Gly-86. An ATP-binding site is contributed by Arg-124. Arg-143 contacts substrate. An ATP-binding site is contributed by Gln-160.

It belongs to the shikimate kinase family. As to quaternary structure, monomer. The cofactor is Mg(2+).

It localises to the cytoplasm. It catalyses the reaction shikimate + ATP = 3-phosphoshikimate + ADP + H(+). It functions in the pathway metabolic intermediate biosynthesis; chorismate biosynthesis; chorismate from D-erythrose 4-phosphate and phosphoenolpyruvate: step 5/7. Its function is as follows. Catalyzes the specific phosphorylation of the 3-hydroxyl group of shikimic acid using ATP as a cosubstrate. The protein is Shikimate kinase of Chromobacterium violaceum (strain ATCC 12472 / DSM 30191 / JCM 1249 / CCUG 213 / NBRC 12614 / NCIMB 9131 / NCTC 9757 / MK).